A 711-amino-acid chain; its full sequence is Polyribonucleotide nucleotidyltransferase (711 aa).

Mg(2+) contacts are provided by D494 and D500. In terms of domain architecture, KH spans P560–I620. The S1 motif domain occupies G651 to C710.

This sequence belongs to the polyribonucleotide nucleotidyltransferase family. Requires Mg(2+) as cofactor.

It localises to the cytoplasm. The enzyme catalyses RNA(n+1) + phosphate = RNA(n) + a ribonucleoside 5'-diphosphate. Involved in mRNA degradation. Catalyzes the phosphorolysis of single-stranded polyribonucleotides processively in the 3'- to 5'-direction. The sequence is that of Polyribonucleotide nucleotidyltransferase from Campylobacter hominis (strain ATCC BAA-381 / DSM 21671 / CCUG 45161 / LMG 19568 / NCTC 13146 / CH001A).